The chain runs to 414 residues: Carbohydrate sulfotransferase 12 (414 aa).

Residues 1-5 are Cytoplasmic-facing; that stretch reads MTKAR. Residues 6–26 traverse the membrane as a helical; Signal-anchor for type II membrane protein segment; sequence LFRLWLVLGSVFMILLIIVYW. The Lumenal segment spans residues 27-414; that stretch reads DSAGAAHFYL…YPKPENLLRD (388 aa). The tract at residues 80-125 is disordered; the sequence is QSDLPRKETEQPPAPGSMEESVRGYDWSPRDARRSPDQGRQQAERR. Over residues 99-125 the composition is skewed to basic and acidic residues; the sequence is ESVRGYDWSPRDARRSPDQGRQQAERR. Asparagine 134 carries N-linked (GlcNAc...) asparagine glycosylation. 171-177 contributes to the 3'-phosphoadenylyl sulfate binding site; the sequence is PKVACTN. Asparagine 209 carries N-linked (GlcNAc...) asparagine glycosylation. 245-253 is a binding site for 3'-phosphoadenylyl sulfate; the sequence is RDPFVRLIS. N-linked (GlcNAc...) asparagine glycans are attached at residues asparagine 280 and asparagine 370.

Belongs to the sulfotransferase 2 family. As to expression, widely expressed. Expressed a high level in spinal chord, heart, spleen, thyroid, pituitary gland, adrenal gland, peripheral blood leukocytes, thymus, lung, small intestine, fetal kidney, fetal spleen and fetal lung.

The protein localises to the golgi apparatus membrane. It carries out the reaction chondroitin beta-D-glucuronate + n 3'-phosphoadenylyl sulfate = chondroitin 4'-sulfate + n adenosine 3',5'-bisphosphate + n H(+). Functionally, catalyzes the transfer of sulfate to position 4 of the N-acetylgalactosamine (GalNAc) residue of chondroitin and desulfated dermatan sulfate. Chondroitin sulfate constitutes the predominant proteoglycan present in cartilage and is distributed on the surfaces of many cells and extracellular matrices. Activity toward partially desulfated dermatan sulfate is however lower. Does not form 4, 6-di-O-sulfated GalNAc when chondroitin sulfate C is used as an acceptor. The protein is Carbohydrate sulfotransferase 12 (CHST12) of Homo sapiens (Human).